A 118-amino-acid polypeptide reads, in one-letter code: UPF0102 protein Arth_2474 (118 aa).

It belongs to the UPF0102 family.

This chain is UPF0102 protein Arth_2474, found in Arthrobacter sp. (strain FB24).